Here is a 74-residue protein sequence, read N- to C-terminus: Guanine nucleotide-binding protein G(T) subunit gamma-T1 (74 aa).

At cysteine 71 the chain carries Cysteine methyl ester. Cysteine 71 is lipidated: S-farnesyl cysteine. Positions 72 to 74 (VIS) are cleaved as a propeptide — removed in mature form.

This sequence belongs to the G protein gamma family. G proteins are composed of 3 units, alpha, beta and gamma. Retinal rod outer segment.

The protein localises to the cell membrane. In terms of biological role, guanine nucleotide-binding proteins (G proteins) are involved as a modulator or transducer in various transmembrane signaling systems. The beta and gamma chains are required for the GTPase activity, for replacement of GDP by GTP, and for G protein-effector interaction. This Canis lupus familiaris (Dog) protein is Guanine nucleotide-binding protein G(T) subunit gamma-T1 (GNGT1).